The primary structure comprises 81 residues: U12-hexatoxin-Mg1a (81 aa).

Positions 1–24 (MKAPATIVILIMSLISVLWATADT) are cleaved as a signal peptide. A propeptide spanning residues 25–50 (EDGNLLFPIEDFIRKFDEYPVQPKER) is cleaved from the precursor. Cystine bridges form between C52-C66, C59-C71, and C65-C75. At P78 the chain carries Proline amide.

In terms of tissue distribution, expressed by the venom gland.

It localises to the secreted. In terms of biological role, blocks voltage-gated sodium channels (Nav). Intracranial injection into mice causes lacrimation, slow breathing and death. Intrathorax injection into crickets causes death. This is U12-hexatoxin-Mg1a from Macrothele gigas (Japanese funnel web spider).